The sequence spans 149 residues: Basic phospholipase A2 homolog MitTx-beta (149 aa).

The N-terminal stretch at Met-1–Leu-30 is a signal peptide. Disulfide bonds link Cys-41/Cys-100, Cys-55/Cys-148, Cys-57/Cys-73, Cys-72/Cys-130, Cys-79/Cys-123, Cys-89/Cys-116, and Cys-109/Cys-121.

The protein belongs to the phospholipase A2 family. Group I subfamily. K49 sub-subfamily. Heterodimer of an alpha (Kunitz-type) and a beta (phospholipase A2 homolog) chains; non-covalently-linked. Expressed by the venom gland.

The protein localises to the secreted. Its function is as follows. Heterodimer: MitTx, a heteromeric complex between Kunitz- and phospholipase-A2-like proteins, potently, persistently and selectively activates rat and chicken acid-sensing ion channel ASIC1. Both alternatively spliced rat isoforms ASIC1a and ASIC1b are activated, with a higher potency for ASIC1a (EC(50)=9.4 nM) vs ASIC1b (EC(50)=23 nM). The rat ASIC3 subtype is also sensitive to the heterodimer, but with a lower potency (EC(50)=830 nM). On rat ASIC2a, the toxin shows a very weak activation, but produces a remarkable potentiation (&gt;100-fold) of protons when the extracellular pH drops below neutrality. Moderate and weak activations are also observed on the heterotrimers Asic1a-Asic2a and Asic1a-Asic3 (expressed in CHO cells), respectively. The binding sites of the beta subunit of MitTx and the spider psalmotoxin-1 toxin overlap, explaining why these toxins are mutually exclusive. In vivo, the heterodimer elicits robust pain-related behavior in mice by activation of ASIC1 channels on capsaicin-sensitive nerve fibers. In terms of biological role, monomer: does not have phospholipase A2 activity but may maintain some lipid-binding character from its PLA2 lineage, which could aid in effecting neuronal depolarization. The polypeptide is Basic phospholipase A2 homolog MitTx-beta (Micrurus tener tener (Texas coral snake)).